Consider the following 428-residue polypeptide: Serine--tRNA ligase (428 aa).

T235–E237 contributes to the L-serine binding site. R266–E268 is an ATP binding site. E289 lines the L-serine pocket. Residue E353–S356 coordinates ATP. An L-serine-binding site is contributed by S389.

It belongs to the class-II aminoacyl-tRNA synthetase family. Type-1 seryl-tRNA synthetase subfamily. As to quaternary structure, homodimer. The tRNA molecule binds across the dimer.

The protein resides in the cytoplasm. The enzyme catalyses tRNA(Ser) + L-serine + ATP = L-seryl-tRNA(Ser) + AMP + diphosphate + H(+). It catalyses the reaction tRNA(Sec) + L-serine + ATP = L-seryl-tRNA(Sec) + AMP + diphosphate + H(+). It participates in aminoacyl-tRNA biosynthesis; selenocysteinyl-tRNA(Sec) biosynthesis; L-seryl-tRNA(Sec) from L-serine and tRNA(Sec): step 1/1. Functionally, catalyzes the attachment of serine to tRNA(Ser). Is also able to aminoacylate tRNA(Sec) with serine, to form the misacylated tRNA L-seryl-tRNA(Sec), which will be further converted into selenocysteinyl-tRNA(Sec). In Blochmanniella pennsylvanica (strain BPEN), this protein is Serine--tRNA ligase.